The sequence spans 292 residues: ATP synthase gamma chain (292 aa).

It belongs to the ATPase gamma chain family. As to quaternary structure, F-type ATPases have 2 components, CF(1) - the catalytic core - and CF(0) - the membrane proton channel. CF(1) has five subunits: alpha(3), beta(3), gamma(1), delta(1), epsilon(1). CF(0) has three main subunits: a, b and c.

The protein localises to the cell inner membrane. In terms of biological role, produces ATP from ADP in the presence of a proton gradient across the membrane. The gamma chain is believed to be important in regulating ATPase activity and the flow of protons through the CF(0) complex. This chain is ATP synthase gamma chain, found in Nitrobacter hamburgensis (strain DSM 10229 / NCIMB 13809 / X14).